A 765-amino-acid polypeptide reads, in one-letter code: Ubiquitin-like modifier-activating enzyme atg7 (765 aa).

Positions 436–441 match the GXGXXG motif motif; sequence GAGTLG. Cys616 functions as the Glycyl thioester intermediate in the catalytic mechanism. 2 disordered regions span residues 646-670 and 744-765; these read AAPA…PPNH and AAND…PELL. The tract at residues 721-760 is homodimerization; it reads ALTEKDYITELSGLAEVQRKAEAAANDVEWDSDEEGMEDE. The segment covering 748–765 has biased composition (acidic residues); the sequence is VEWDSDEEGMEDEEPELL.

This sequence belongs to the ATG7 family. In terms of assembly, homodimer. Interacts with ATG8 through a thioester bond between Cys-616 and the C-terminal Gly of ATG8 and with ATG12 through a thioester bond between Cys-616 and the C-terminal Gly of ATG12. Also interacts with ATG3.

Its subcellular location is the cytoplasm. It localises to the preautophagosomal structure. In terms of biological role, E1-like activating enzyme involved in the 2 ubiquitin-like systems required for cytoplasm to vacuole transport (Cvt) and autophagy. Activates ATG12 for its conjugation with ATG5 and ATG8 for its conjugation with phosphatidylethanolamine. Both systems are needed for the ATG8 association to Cvt vesicles and autophagosomes membranes. Autophagy is essential for maintenance of amino acid levels and protein synthesis under nitrogen starvation. Required for selective autophagic degradation of the nucleus (nucleophagy) as well as for mitophagy which contributes to regulate mitochondrial quantity and quality by eliminating the mitochondria to a basal level to fulfill cellular energy requirements and preventing excess ROS production. Required for normal mycelial growth and conidiogenesis, and regulates sclerotial formation. Plays an essential role in pathogenesis. In Botryotinia fuckeliana (strain BcDW1) (Noble rot fungus), this protein is Ubiquitin-like modifier-activating enzyme atg7.